Reading from the N-terminus, the 109-residue chain is Iron-sulfur cluster assembly protein CyaY (109 aa).

It belongs to the frataxin family.

In terms of biological role, involved in iron-sulfur (Fe-S) cluster assembly. May act as a regulator of Fe-S biogenesis. The chain is Iron-sulfur cluster assembly protein CyaY from Bordetella bronchiseptica (strain ATCC BAA-588 / NCTC 13252 / RB50) (Alcaligenes bronchisepticus).